A 74-amino-acid chain; its full sequence is Protein WFDC9 (74 aa).

The signal sequence occupies residues 1 to 19 (MKFWILLLTVSAHGIVVFL).

The protein localises to the secreted. This Rattus norvegicus (Rat) protein is Protein WFDC9 (Wfdc9).